The sequence spans 35 residues: Natriuretic peptide TNPb (35 aa).

Cysteines 9 and 25 form a disulfide.

In terms of tissue distribution, expressed by the venom gland.

It is found in the secreted. Its function is as follows. Snake venom natriuretic peptide that exhibits vasoactive and probable hypotensive activity. Is only weakly active on natriuretic peptide receptor-C (NPR3). Stimulates cGMP production through the natriuretic peptide receptor 1 (NPR1) with moderate potencies for the rat NPR1 (EC(50)=1200 nM), and very weak potencies over human NPR1 (30% activation at 10 uM). In vivo, does not impact systolic and diastolic blood pressure, as well as heart rate, when intravenously injected in conscious rabbits. Does not affect the bradycardia due to cardiac afferent stimulation (Bezold-Jarisch reflex). The sequence is that of Natriuretic peptide TNPb from Oxyuranus microlepidotus (Inland taipan).